Reading from the N-terminus, the 271-residue chain is Fork head domain-containing protein FD5 (271 aa).

Positions 12 to 103 (QKPPYSYISL…FDMFENGSLL (92 aa)) form a DNA-binding region, fork-head.

Expressed in early embryogenesis in 14 symmetrical pairs of segmentally arranged neuroblasts and in developing peripheral nervous system. Also, later in embryogenesis, in a cluster of cells in head region.

The protein localises to the nucleus. Its function is as follows. Involved in development during embryogenesis. The polypeptide is Fork head domain-containing protein FD5 (fd96Cb) (Drosophila melanogaster (Fruit fly)).